The primary structure comprises 290 residues: 4-hydroxy-tetrahydrodipicolinate synthase (290 aa).

T44 contacts pyruvate. Y132 functions as the Proton donor/acceptor in the catalytic mechanism. K160 (schiff-base intermediate with substrate) is an active-site residue. I202 is a binding site for pyruvate.

The protein belongs to the DapA family. Homotetramer; dimer of dimers.

Its subcellular location is the cytoplasm. It catalyses the reaction L-aspartate 4-semialdehyde + pyruvate = (2S,4S)-4-hydroxy-2,3,4,5-tetrahydrodipicolinate + H2O + H(+). The protein operates within amino-acid biosynthesis; L-lysine biosynthesis via DAP pathway; (S)-tetrahydrodipicolinate from L-aspartate: step 3/4. Catalyzes the condensation of (S)-aspartate-beta-semialdehyde [(S)-ASA] and pyruvate to 4-hydroxy-tetrahydrodipicolinate (HTPA). The polypeptide is 4-hydroxy-tetrahydrodipicolinate synthase (Alkaliphilus oremlandii (strain OhILAs) (Clostridium oremlandii (strain OhILAs))).